The sequence spans 275 residues: Elongation factor Ts (275 aa).

Residues 76-79 are involved in Mg(2+) ion dislocation from EF-Tu; sequence TDFV.

This sequence belongs to the EF-Ts family.

The protein localises to the cytoplasm. Associates with the EF-Tu.GDP complex and induces the exchange of GDP to GTP. It remains bound to the aminoacyl-tRNA.EF-Tu.GTP complex up to the GTP hydrolysis stage on the ribosome. The polypeptide is Elongation factor Ts (Corynebacterium kroppenstedtii (strain DSM 44385 / JCM 11950 / CIP 105744 / CCUG 35717)).